The sequence spans 215 residues: 3-isopropylmalate dehydratase small subunit (215 aa).

This sequence belongs to the LeuD family. LeuD type 1 subfamily. As to quaternary structure, heterodimer of LeuC and LeuD.

The enzyme catalyses (2R,3S)-3-isopropylmalate = (2S)-2-isopropylmalate. Its pathway is amino-acid biosynthesis; L-leucine biosynthesis; L-leucine from 3-methyl-2-oxobutanoate: step 2/4. Catalyzes the isomerization between 2-isopropylmalate and 3-isopropylmalate, via the formation of 2-isopropylmaleate. The protein is 3-isopropylmalate dehydratase small subunit of Xanthomonas euvesicatoria pv. vesicatoria (strain 85-10) (Xanthomonas campestris pv. vesicatoria).